Reading from the N-terminus, the 207-residue chain is Redox-sensing transcriptional repressor Rex (207 aa).

The H-T-H motif DNA-binding region spans 15–54; it reads LYYRCLNRLYEEGIEYVASKDIAERLGIKSSQVRKDLSYF. An NAD(+)-binding site is contributed by 89 to 94; it reads GAGNIG.

The protein belongs to the transcriptional regulatory Rex family. In terms of assembly, homodimer.

It localises to the cytoplasm. Functionally, modulates transcription in response to changes in cellular NADH/NAD(+) redox state. The chain is Redox-sensing transcriptional repressor Rex from Thermosipho africanus (strain TCF52B).